The chain runs to 186 residues: NADH dehydrogenase [ubiquinone] 1 beta subcomplex subunit 8, mitochondrial (186 aa).

The transit peptide at 1-28 (MAAARAGVLGVRWLQKAARNVVPLGART) directs the protein to the mitochondrion. A helical transmembrane segment spans residues 133-153 (LFGFVAFMLFMFWVGETYPAY).

It belongs to the complex I NDUFB8 subunit family. In terms of assembly, complex I is composed of 45 different subunits.

It localises to the mitochondrion inner membrane. In terms of biological role, accessory subunit of the mitochondrial membrane respiratory chain NADH dehydrogenase (Complex I), that is believed not to be involved in catalysis. Complex I functions in the transfer of electrons from NADH to the respiratory chain. The immediate electron acceptor for the enzyme is believed to be ubiquinone. The polypeptide is NADH dehydrogenase [ubiquinone] 1 beta subcomplex subunit 8, mitochondrial (NDUFB8) (Bos taurus (Bovine)).